The sequence spans 206 residues: Holliday junction branch migration complex subunit RuvA (206 aa).

The interval 1–67 (MIASIFGKIT…QILEEGFAFN (67 aa)) is domain I. The interval 68–141 (TLEEKEWFSK…YDRDDGGKRI (74 aa)) is domain II. The interval 141–145 (IKPNT) is flexible linker. The interval 146 to 206 (AMANDYDEMF…QNNEVTNKTA (61 aa)) is domain III.

The protein belongs to the RuvA family. In terms of assembly, homotetramer. Forms an RuvA(8)-RuvB(12)-Holliday junction (HJ) complex. HJ DNA is sandwiched between 2 RuvA tetramers; dsDNA enters through RuvA and exits via RuvB. An RuvB hexamer assembles on each DNA strand where it exits the tetramer. Each RuvB hexamer is contacted by two RuvA subunits (via domain III) on 2 adjacent RuvB subunits; this complex drives branch migration. In the full resolvosome a probable DNA-RuvA(4)-RuvB(12)-RuvC(2) complex forms which resolves the HJ.

It localises to the cytoplasm. The RuvA-RuvB-RuvC complex processes Holliday junction (HJ) DNA during genetic recombination and DNA repair, while the RuvA-RuvB complex plays an important role in the rescue of blocked DNA replication forks via replication fork reversal (RFR). RuvA specifically binds to HJ cruciform DNA, conferring on it an open structure. The RuvB hexamer acts as an ATP-dependent pump, pulling dsDNA into and through the RuvAB complex. HJ branch migration allows RuvC to scan DNA until it finds its consensus sequence, where it cleaves and resolves the cruciform DNA. In Mycoplasma pneumoniae (strain ATCC 29342 / M129 / Subtype 1) (Mycoplasmoides pneumoniae), this protein is Holliday junction branch migration complex subunit RuvA.